A 330-amino-acid chain; its full sequence is Atypical chemokine receptor 1 (330 aa).

Residues M1–P57 are Extracellular-facing. Residues N12, N35, and N52 are each glycosylated (N-linked (GlcNAc...) asparagine). 2 cysteine pairs are disulfide-bonded: C45–C270 and C123–C189. A helical transmembrane segment spans residues F58–L78. Residues R79 to D89 are Cytoplasmic-facing. The helical transmembrane segment at R90 to L110 threads the bilayer. Over A111–C123 the chain is Extracellular. A helical membrane pass occupies residues H124–L147. Over G148–R160 the chain is Cytoplasmic. Residues L161–G181 traverse the membrane as a helical segment. Over S182–R201 the chain is Extracellular. The helical transmembrane segment at Y202 to T222 threads the bilayer. Residues K223–D238 are Cytoplasmic-facing. The helical transmembrane segment at V239 to L259 threads the bilayer. Residues V260–D281 are Extracellular-facing. A helical transmembrane segment spans residues V282–C302. At Y303–S330 the chain is on the cytoplasmic side.

Belongs to the G-protein coupled receptor 1 family. Atypical chemokine receptor subfamily.

The protein localises to the early endosome. It localises to the recycling endosome. Its subcellular location is the membrane. Atypical chemokine receptor that controls chemokine levels and localization via high-affinity chemokine binding that is uncoupled from classic ligand-driven signal transduction cascades, resulting instead in chemokine sequestration, degradation, or transcytosis. Also known as interceptor (internalizing receptor) or chemokine-scavenging receptor or chemokine decoy receptor. Has a promiscuous chemokine-binding profile, interacting with inflammatory chemokines of both the CXC and the CC subfamilies but not with homeostatic chemokines. Acts as a receptor for chemokines including CCL2, CCL5, CCL7, CCL11, CCL13, CCL14, CCL17, CXCL5, CXCL6, IL8/CXCL8, CXCL11, GRO, RANTES, MCP-1 and TARC. May regulate chemokine bioavailability and, consequently, leukocyte recruitment through two distinct mechanisms: when expressed in endothelial cells, it sustains the abluminal to luminal transcytosis of tissue-derived chemokines and their subsequent presentation to circulating leukocytes; when expressed in erythrocytes, serves as blood reservoir of cognate chemokines but also as a chemokine sink, buffering potential surges in plasma chemokine levels. In Bos taurus (Bovine), this protein is Atypical chemokine receptor 1 (ACKR1).